Consider the following 345-residue polypeptide: L-threonine 3-dehydrogenase (345 aa).

A Zn(2+)-binding site is contributed by cysteine 39. Residues threonine 41 and histidine 44 each act as charge relay system in the active site. Zn(2+)-binding residues include histidine 64, glutamate 65, cysteine 94, cysteine 97, cysteine 100, and cysteine 108. NAD(+) is bound by residues isoleucine 176, aspartate 196, arginine 201, 263–265, and 287–288; these read LGI and VY.

Belongs to the zinc-containing alcohol dehydrogenase family. Homotetramer. Zn(2+) serves as cofactor.

It is found in the cytoplasm. The enzyme catalyses L-threonine + NAD(+) = (2S)-2-amino-3-oxobutanoate + NADH + H(+). Its pathway is amino-acid degradation; L-threonine degradation via oxydo-reductase pathway; glycine from L-threonine: step 1/2. Its function is as follows. Catalyzes the NAD(+)-dependent oxidation of L-threonine to 2-amino-3-ketobutyrate. In Anaeromyxobacter dehalogenans (strain 2CP-1 / ATCC BAA-258), this protein is L-threonine 3-dehydrogenase.